A 474-amino-acid chain; its full sequence is Eukaryotic translation initiation factor 3 subunit L (474 aa).

Residues 255–449 (DAIRMFSHIL…DLDYALQGDL (195 aa)) enclose the PCI domain.

It belongs to the eIF-3 subunit L family. In terms of assembly, component of the eukaryotic translation initiation factor 3 (eIF-3) complex.

The protein resides in the cytoplasm. Component of the eukaryotic translation initiation factor 3 (eIF-3) complex, which is involved in protein synthesis of a specialized repertoire of mRNAs and, together with other initiation factors, stimulates binding of mRNA and methionyl-tRNAi to the 40S ribosome. The eIF-3 complex specifically targets and initiates translation of a subset of mRNAs involved in cell proliferation. This is Eukaryotic translation initiation factor 3 subunit L from Neurospora crassa (strain ATCC 24698 / 74-OR23-1A / CBS 708.71 / DSM 1257 / FGSC 987).